A 183-amino-acid chain; its full sequence is Crossover junction endodeoxyribonuclease RuvC (183 aa).

Catalysis depends on residues Asp-7, Glu-66, and Asp-138. Residues Asp-7, Glu-66, and Asp-138 each coordinate Mg(2+).

The protein belongs to the RuvC family. As to quaternary structure, homodimer which binds Holliday junction (HJ) DNA. The HJ becomes 2-fold symmetrical on binding to RuvC with unstacked arms; it has a different conformation from HJ DNA in complex with RuvA. In the full resolvosome a probable DNA-RuvA(4)-RuvB(12)-RuvC(2) complex forms which resolves the HJ. It depends on Mg(2+) as a cofactor.

It is found in the cytoplasm. The catalysed reaction is Endonucleolytic cleavage at a junction such as a reciprocal single-stranded crossover between two homologous DNA duplexes (Holliday junction).. Functionally, the RuvA-RuvB-RuvC complex processes Holliday junction (HJ) DNA during genetic recombination and DNA repair. Endonuclease that resolves HJ intermediates. Cleaves cruciform DNA by making single-stranded nicks across the HJ at symmetrical positions within the homologous arms, yielding a 5'-phosphate and a 3'-hydroxyl group; requires a central core of homology in the junction. The consensus cleavage sequence is 5'-(A/T)TT(C/G)-3'. Cleavage occurs on the 3'-side of the TT dinucleotide at the point of strand exchange. HJ branch migration catalyzed by RuvA-RuvB allows RuvC to scan DNA until it finds its consensus sequence, where it cleaves and resolves the cruciform DNA. This Burkholderia ambifaria (strain MC40-6) protein is Crossover junction endodeoxyribonuclease RuvC.